The sequence spans 536 residues: Probable protein S-acyltransferase 23 (536 aa).

A disordered region spans residues 1 to 23; the sequence is MDSSEIEVVPLDSNSHQSPTESP. The segment covering 12–23 has biased composition (polar residues); that stretch reads DSNSHQSPTESP. ANK repeat units lie at residues 57–86, 90–119, 123–153, 157–186, 190–219, and 225–254; these read NGFY…DVNS, IQQT…RIEA, NGFR…DYNA, EGRS…CQNR, TGCT…KEEL, and TGST…TRKN. 2 consecutive transmembrane segments (helical) span residues 270–290 and 298–318; these read YAPM…TSIV and ITAM…YALI. The 51-residue stretch at 363–413 folds into the DHHC domain; that stretch reads QLCPTCKIIRPVRSKHCPTCKRCVEQFDHHCPWISNCVGKKNKRYFLVFVI. Residue Cys-393 is the S-palmitoyl cysteine intermediate of the active site. The next 2 membrane-spanning stretches (helical) occupy residues 407–427 and 454–474; these read YFLV…TTAV and AAVF…LTIS.

It belongs to the DHHC palmitoyltransferase family. As to expression, expressed in roots, shoots, flowers and pollen.

The protein resides in the golgi apparatus membrane. The enzyme catalyses L-cysteinyl-[protein] + hexadecanoyl-CoA = S-hexadecanoyl-L-cysteinyl-[protein] + CoA. In terms of biological role, palmitoyl acyltransferase. The polypeptide is Probable protein S-acyltransferase 23 (PAT23) (Arabidopsis thaliana (Mouse-ear cress)).